Here is a 153-residue protein sequence, read N- to C-terminus: Bud site selection protein 25 (153 aa).

In terms of biological role, involved in bud site selection. Required for resistance to the DNA-damaging agent methyl methanesulfonate (MMS). The protein is Bud site selection protein 25 of Saccharomyces cerevisiae (strain ATCC 204508 / S288c) (Baker's yeast).